We begin with the raw amino-acid sequence, 548 residues long: Synaptic vesicle 2-related protein (548 aa).

The Cytoplasmic segment spans residues 1–87 (MEEDLFQLRQ…GFGKFQWKLS (87 aa)). A phosphoserine mark is found at Ser-25 and Ser-31. Residues 88 to 108 (VLTGLAWMADAMEMMILSILA) traverse the membrane as a helical segment. Topologically, residues 109–122 (PQLHCEWRLPSWQV) are vesicular. A helical membrane pass occupies residues 123-143 (ALLTSVVFVGMMSSSTLWGNI). At 144–156 (SDQYGRKTGLKIS) the chain is on the cytoplasmic side. A helical transmembrane segment spans residues 157–177 (VLWTLYYGILSAFAPVYSWIL). Residues 178-180 (VLR) lie on the Vesicular side of the membrane. The chain crosses the membrane as a helical span at residues 181–201 (GLVGFGIGGVPQSVTLYAEFL). The Cytoplasmic segment spans residues 202–209 (PMKARAKC). Residues 210–230 (ILLIEVFWAIGTVFEVVLAVF) traverse the membrane as a helical segment. The Vesicular segment spans residues 231–238 (VMPSLGWR). Residues 239–259 (WLLILSAVPLLLFAVLCFWLP) traverse the membrane as a helical segment. At 260 to 316 (ESARYDVLSGNQEKAIATLKRIATENGAPMPLGKLIISRQEDRGKMRDLFTPHFRWT) the chain is on the cytoplasmic side. Residues 317 to 337 (TLLLWFIWFSNAFSYYGLVLL) form a helical membrane-spanning segment. Residues 338–373 (TTELFQAGDVCSISSRKKAVEAKCSLACEYLSEEDY) lie on the Vesicular side of the membrane. A helical membrane pass occupies residues 374-394 (MDLLWTTLSEFPGVLVTLWII). Residues 395 to 401 (DRLGRKK) lie on the Cytoplasmic side of the membrane. The chain crosses the membrane as a helical span at residues 402-422 (TMALCFVVFSFCSLLLFICVG). At 423-425 (RNM) the chain is on the vesicular side. Residues 426 to 446 (LTLLLFIARAFISGGFQAAYV) form a helical membrane-spanning segment. Over 447-457 (YTPEVYPTATR) the chain is Cytoplasmic. The helical transmembrane segment at 458–478 (ALGLGTCSGMARVGALITPFI) threads the bilayer. The Vesicular portion of the chain corresponds to 479 to 489 (AQVMLESSVYL). The helical transmembrane segment at 490-510 (TLAVYSGCCLLAALASCFLPI) threads the bilayer. Over 511 to 548 (ETKGRGLQESSHREWGQEMVGRGAHGTGVARSNSGSQE) the chain is Cytoplasmic. Residues 528–548 (EMVGRGAHGTGVARSNSGSQE) form a disordered region. Ser-542 is modified (phosphoserine).

It belongs to the major facilitator superfamily. In terms of tissue distribution, detected in brain and adrenal medulla.

It localises to the cytoplasmic vesicle. It is found in the secretory vesicle. The protein resides in the synaptic vesicle membrane. The protein is Synaptic vesicle 2-related protein (SVOP) of Bos taurus (Bovine).